The chain runs to 354 residues: NADH-ubiquinone oxidoreductase chain 2 (354 aa).

The next 10 membrane-spanning stretches (helical) occupy residues isoleucine 5–histidine 25, tryptophan 26–tyrosine 46, phenylalanine 60–leucine 80, phenylalanine 96–proline 116, valine 122–leucine 142, leucine 149–glycine 169, valine 198–methionine 218, alanine 242–isoleucine 262, glycine 274–leucine 294, and valine 330–isoleucine 350.

It belongs to the complex I subunit 2 family.

The protein localises to the mitochondrion inner membrane. The catalysed reaction is a ubiquinone + NADH + 5 H(+)(in) = a ubiquinol + NAD(+) + 4 H(+)(out). Functionally, core subunit of the mitochondrial membrane respiratory chain NADH dehydrogenase (Complex I) that is believed to belong to the minimal assembly required for catalysis. Complex I functions in the transfer of electrons from NADH to the respiratory chain. The immediate electron acceptor for the enzyme is believed to be ubiquinone. In Patiria pectinifera (Starfish), this protein is NADH-ubiquinone oxidoreductase chain 2 (ND2).